Reading from the N-terminus, the 772-residue chain is MEPEREGTERHPRKVRKRRQAPNKLVGAAEAMKASWDLEESQPEAKKARLSTILFTDNCEVTHDQLCELLKYAVLGKSNVPKPSWCQLFHQNHLNNVVVFVLQGMSQLHFYRFYLEFGCLRKAFRHKFRLPPPSSDFLADIVGLQTKQRVGDLPKTMEGPLPSNAKATINLQNDPIIQKYGCKKVGLTRCLLTKEEMRTFHFPLQGFPECENFLLTKCNGSIADNSPLFGLDCEMCLTSKGRELTRISLVAEGGCCVMDELVKPENKILDYLTSFSGITKKILNPVTTKLKDVQRQLKALLPPDAVLVGHSLDLDLRALKMIHPYVIDTSLLYVREQGRRFKLKFLAKAILGKDIQCPDRLGHDATEDARIILELAQYFLKYGPKKIAELNLEALANHQEIQAAGQEPRNTTEILQHPNTSVLECLDSVGQKLLFLTRETDAGELASSRNCQTIKCLSNKEVLEQARVEIPLFPFSIVQFSFKAFSPILTEEMNKRMRIKWTEISTVYAGPFSKNCNLRALKRLFKSFGPVQSMTFVLETRQPHLCIQYEVLEAAQLAIESLDGILVDGTCIKVQRPVTELTLDCETLVNELEGDSENQGSIYLFGVSETFKEQLLQEPRLFLGLGAVILPKDLKNGKQKKYCFLKFKSFGSAQRALNILTGKDWKLKGRHALTPRHLHAWLRGLPPESRRPAGLRVVPPPFEQEALQTLKLDHPKIAAWRWGRKIGKLYNSLCPGTLCLILLPGTKSTHGSLSGLGLMGIKEEEESTISGL.

Basic and acidic residues predominate over residues 1–10; the sequence is MEPEREGTER. The interval 1–26 is disordered; sequence MEPEREGTERHPRKVRKRRQAPNKLV. A compositionally biased stretch (basic residues) spans 11–21; sequence HPRKVRKRRQA. One can recognise an Exonuclease domain in the interval 228-376; the sequence is LFGLDCEMCL…EDARIILELA (149 aa). RRM domains follow at residues 505–579 and 600–679; these read STVY…RPVT and GSIY…RHLH.

The sequence is that of RNA exonuclease 5 (REXO5) from Macaca fascicularis (Crab-eating macaque).